Here is a 403-residue protein sequence, read N- to C-terminus: MESVGCCGDCRGSSVDPRSTFVLSNLAEVVERVLTFLPAKALLRVACVCRLWRECVRRVLRTHRSVTWISAGLAEASHLERHCLVRVVAEELENVRILPHTVLYMADSETFISLEECRGHKRARKRTSMETALALEKLFPKQCQVLGIVTPGIVVTPMGSGSNRPQEIEIGESGFALLFPQIEGIKIQPFHFIKDPKNLTLERHQLTEVGLLDNPELRVVLVFGYNCCKVGASNYLQQVVSTFSDMNIILAGGQVDNLSSLTSEKNPLDIDASGVVGLSFSGHRIQSATVLLNEDVSDEKTAEAAMQRLRAANIPEQNTIGFMFACVGRGFQYYRAKGNVEADAFRKFFPSVPLFGFFGNGEIGCDRIVTGNFILRKCNEVKDDDLFHSYTTIMALIHLGSSK.

M1 is subject to N-acetylmethionine. The F-box domain maps to 19 to 71 (STFVLSNLAEVVERVLTFLPAKALLRVACVCRLWRECVRRVLRTHRSVTWISA). S128 is subject to Phosphoserine. The residue at position 194 (K194) is an N6-acetyllysine.

In terms of assembly, directly interacts with SKP1 and CUL1.

Its subcellular location is the cytoplasm. It localises to the myofibril. The protein resides in the sarcomere. It is found in the z line. In terms of biological role, substrate-recognition component of the SCF (SKP1-CUL1-F-box protein)-type E3 ubiquitin ligase complex. Promotes the proteasome-dependent degradation of key sarcomeric proteins, such as alpha-actinin (ACTN2) and filamin-C (FLNC), essential for maintenance of normal contractile function. The protein is F-box only protein 22 (FBXO22) of Pongo abelii (Sumatran orangutan).